The primary structure comprises 110 residues: NADH-quinone oxidoreductase subunit K (110 aa).

3 helical membrane-spanning segments follow: residues 13-33 (VTHGLIFSILLFVISVAGIII), 38-58 (ILILLMSIELMLLAVNTNFLI), and 70-90 (VFVFFIMAVAAAETAIGLAIV).

This sequence belongs to the complex I subunit 4L family. In terms of assembly, NDH-1 is composed of 14 different subunits. Subunits NuoA, H, J, K, L, M, N constitute the membrane sector of the complex.

It localises to the cell inner membrane. It catalyses the reaction a quinone + NADH + 5 H(+)(in) = a quinol + NAD(+) + 4 H(+)(out). NDH-1 shuttles electrons from NADH, via FMN and iron-sulfur (Fe-S) centers, to quinones in the respiratory chain. The immediate electron acceptor for the enzyme in this species is believed to be ubiquinone. Couples the redox reaction to proton translocation (for every two electrons transferred, four hydrogen ions are translocated across the cytoplasmic membrane), and thus conserves the redox energy in a proton gradient. The polypeptide is NADH-quinone oxidoreductase subunit K (Francisella tularensis subsp. holarctica (strain FTNF002-00 / FTA)).